Here is a 258-residue protein sequence, read N- to C-terminus: uncharacterized protein (258 aa).

One can recognise a Cyclin N-terminal domain in the interval 16–148 (EAFDSFEYAE…VLRALNFDTH (133 aa)).

Belongs to the cyclin family. Cyclin L subfamily.

The protein localises to the cytoplasm. It localises to the nucleus. This is an uncharacterized protein from Schizosaccharomyces pombe (strain 972 / ATCC 24843) (Fission yeast).